The chain runs to 37 residues: Large ribosomal subunit protein bL36 (37 aa).

It belongs to the bacterial ribosomal protein bL36 family.

This Symbiobacterium thermophilum (strain DSM 24528 / JCM 14929 / IAM 14863 / T) protein is Large ribosomal subunit protein bL36.